The following is a 235-amino-acid chain: RNA pyrophosphohydrolase (235 aa).

Positions 6–149 (GFRPNVGIIL…KRGVYEMALT (144 aa)) constitute a Nudix hydrolase domain. The Nudix box motif lies at 38 to 59 (GGIDRGENPEQAMFRELHEEVG). Residues 184–235 (ANQSGEPGSFPAAGGIPSYATRPGAPFELPPGATFEPDPQTSFGVNAPTKKT) are disordered.

It belongs to the Nudix hydrolase family. RppH subfamily. A divalent metal cation is required as a cofactor.

Its function is as follows. Accelerates the degradation of transcripts by removing pyrophosphate from the 5'-end of triphosphorylated RNA, leading to a more labile monophosphorylated state that can stimulate subsequent ribonuclease cleavage. The sequence is that of RNA pyrophosphohydrolase from Polaromonas naphthalenivorans (strain CJ2).